The following is a 290-amino-acid chain: Agroclavine dehydrogenase (290 aa).

This sequence belongs to the fgaFS/easG family. As to quaternary structure, monomer.

It carries out the reaction agroclavine + NADP(+) = didehydroagroclavine + NADPH + H(+). It functions in the pathway alkaloid biosynthesis; ergot alkaloid biosynthesis. Its function is as follows. Agroclavine dehydrogenase; part of the gene cluster that mediates the biosynthesis of fungal ergot alkaloid. DmaW catalyzes the first step of ergot alkaloid biosynthesis by condensing dimethylallyl diphosphate (DMAP) and tryptophan to form 4-dimethylallyl-L-tryptophan. The second step is catalyzed by the methyltransferase easF that methylates 4-dimethylallyl-L-tryptophan in the presence of S-adenosyl-L-methionine, resulting in the formation of 4-dimethylallyl-L-abrine. The catalase easC and the FAD-dependent oxidoreductase easE then transform 4-dimethylallyl-L-abrine to chanoclavine-I which is further oxidized by easD in the presence of NAD(+), resulting in the formation of chanoclavine-I aldehyde. Agroclavine dehydrogenase easG then mediates the conversion of chanoclavine-I aldehyde to agroclavine via a non-enzymatic adduct reaction: the substrate is an iminium intermediate that is formed spontaneously from chanoclavine-I aldehyde in the presence of glutathione. The presence of easA is not required to complete this reaction. Further conversion of agroclavine to paspalic acid is a two-step process involving oxidation of agroclavine to elymoclavine and of elymoclavine to paspalic acid, the second step being performed by the elymoclavine oxidase cloA. Paspalic acid is then further converted to D-lysergic acid. Ergopeptines are assembled from D-lysergic acid and three different amino acids by the D-lysergyl-peptide-synthetases composed each of a monomudular and a trimodular nonribosomal peptide synthetase subunit. LpsB and lpsC encode the monomodular subunits responsible for D-lysergic acid activation and incorporation into the ergopeptine backbone. LpsA1 and A2 subunits encode the trimodular nonribosomal peptide synthetase assembling the tripeptide portion of ergopeptines. LpsA1 is responsible for formation of the major ergopeptine, ergotamine, and lpsA2 for alpha-ergocryptine, the minor ergopeptine of the total alkaloid mixture elaborated by C.purpurea. D-lysergyl-tripeptides are assembled by the nonribosomal peptide synthetases and released as N-(D-lysergyl-aminoacyl)-lactams. Cyclolization of the D-lysergyl-tripeptides is performed by the Fe(2+)/2-ketoglutarate-dependent dioxygenase easH which introduces a hydroxyl group into N-(D-lysergyl-aminoacyl)-lactam at alpha-C of the aminoacyl residue followed by spontaneous condensation with the terminal lactam carbonyl group. This is Agroclavine dehydrogenase from Claviceps purpurea (Ergot fungus).